A 428-amino-acid chain; its full sequence is Nucleotidyltransferase MB21D2 (428 aa).

The segment at 366-389 (QRRGSTTSIPSPQSDGGDPNQPDD) is disordered. A compositionally biased stretch (polar residues) spans 368–379 (RGSTTSIPSPQS). Thr-372 carries the post-translational modification Phosphothreonine. A phosphoserine mark is found at Ser-373, Ser-376, and Ser-379.

It belongs to the mab-21 family.

Functionally, probable nucleotidyltransferase that catalyzes the formation of cyclic dinucleotide second messenger in response to some unknown stimulus. The protein is Nucleotidyltransferase MB21D2 of Mus musculus (Mouse).